Here is a 462-residue protein sequence, read N- to C-terminus: Trigger factor (462 aa).

A PPIase FKBP-type domain is found at 163–259 (TDYVNIDLQR…VNDVKRRDLP (97 aa)). The interval 439 to 462 (SREEFEEEMQQQQQQQAQRQRMAP) is disordered. Residues 448 to 462 (QQQQQQQAQRQRMAP) are compositionally biased toward low complexity.

This sequence belongs to the FKBP-type PPIase family. Tig subfamily.

The protein localises to the cytoplasm. It catalyses the reaction [protein]-peptidylproline (omega=180) = [protein]-peptidylproline (omega=0). In terms of biological role, involved in protein export. Acts as a chaperone by maintaining the newly synthesized protein in an open conformation. Functions as a peptidyl-prolyl cis-trans isomerase. The chain is Trigger factor from Salinibacter ruber (strain DSM 13855 / M31).